Reading from the N-terminus, the 186-residue chain is Pyridoxal 5'-phosphate synthase subunit PdxT (186 aa).

Residue 46–48 (GES) coordinates L-glutamine. The active-site Nucleophile is the cysteine 75. Residues arginine 101 and 127-128 (IR) contribute to the L-glutamine site. Active-site charge relay system residues include histidine 164 and glutamate 166.

This sequence belongs to the glutaminase PdxT/SNO family. In the presence of PdxS, forms a dodecamer of heterodimers. Only shows activity in the heterodimer.

It carries out the reaction aldehydo-D-ribose 5-phosphate + D-glyceraldehyde 3-phosphate + L-glutamine = pyridoxal 5'-phosphate + L-glutamate + phosphate + 3 H2O + H(+). It catalyses the reaction L-glutamine + H2O = L-glutamate + NH4(+). The protein operates within cofactor biosynthesis; pyridoxal 5'-phosphate biosynthesis. Functionally, catalyzes the hydrolysis of glutamine to glutamate and ammonia as part of the biosynthesis of pyridoxal 5'-phosphate. The resulting ammonia molecule is channeled to the active site of PdxS. The chain is Pyridoxal 5'-phosphate synthase subunit PdxT from Methanococcus aeolicus (strain ATCC BAA-1280 / DSM 17508 / OCM 812 / Nankai-3).